The primary structure comprises 347 residues: Large ribosomal subunit protein uL3 (347 aa).

A disordered region spans residues 325 to 347; that stretch reads RPPKKKPPVERPQITYISRESKQ.

This sequence belongs to the universal ribosomal protein uL3 family. Part of the 50S ribosomal subunit. Forms a cluster with proteins L14 and L24e.

Functionally, one of the primary rRNA binding proteins, it binds directly near the 3'-end of the 23S rRNA, where it nucleates assembly of the 50S subunit. This is Large ribosomal subunit protein uL3 from Thermococcus onnurineus (strain NA1).